The primary structure comprises 443 residues: ATP-dependent protease ATPase subunit HslU (443 aa).

ATP is bound by residues I18, 60 to 65 (GVGKTE), D256, E321, and R393.

The protein belongs to the ClpX chaperone family. HslU subfamily. In terms of assembly, a double ring-shaped homohexamer of HslV is capped on each side by a ring-shaped HslU homohexamer. The assembly of the HslU/HslV complex is dependent on binding of ATP.

Its subcellular location is the cytoplasm. ATPase subunit of a proteasome-like degradation complex; this subunit has chaperone activity. The binding of ATP and its subsequent hydrolysis by HslU are essential for unfolding of protein substrates subsequently hydrolyzed by HslV. HslU recognizes the N-terminal part of its protein substrates and unfolds these before they are guided to HslV for hydrolysis. In Shigella dysenteriae serotype 1 (strain Sd197), this protein is ATP-dependent protease ATPase subunit HslU.